The chain runs to 229 residues: Enolase-phosphatase E1 (229 aa).

Mg(2+) contacts are provided by D7 and E9. Substrate contacts are provided by residues 122–123 (SS) and K161. D186 provides a ligand contact to Mg(2+).

The protein belongs to the HAD-like hydrolase superfamily. MasA/MtnC family. In terms of assembly, monomer. The cofactor is Mg(2+).

The protein resides in the cytoplasm. The protein localises to the nucleus. The catalysed reaction is 5-methylsulfanyl-2,3-dioxopentyl phosphate + H2O = 1,2-dihydroxy-5-(methylsulfanyl)pent-1-en-3-one + phosphate. It functions in the pathway amino-acid biosynthesis; L-methionine biosynthesis via salvage pathway; L-methionine from S-methyl-5-thio-alpha-D-ribose 1-phosphate: step 3/6. It participates in amino-acid biosynthesis; L-methionine biosynthesis via salvage pathway; L-methionine from S-methyl-5-thio-alpha-D-ribose 1-phosphate: step 4/6. In terms of biological role, bifunctional enzyme that catalyzes the enolization of 2,3-diketo-5-methylthiopentyl-1-phosphate (DK-MTP-1-P) into the intermediate 2-hydroxy-3-keto-5-methylthiopentenyl-1-phosphate (HK-MTPenyl-1-P), which is then dephosphorylated to form the acireductone 1,2-dihydroxy-3-keto-5-methylthiopentene (DHK-MTPene). This chain is Enolase-phosphatase E1, found in Clavispora lusitaniae (strain ATCC 42720) (Yeast).